Reading from the N-terminus, the 190-residue chain is Xanthine phosphoribosyltransferase (190 aa).

Xanthine is bound by residues leucine 20 and asparagine 27. 128–132 is a 5-phospho-alpha-D-ribose 1-diphosphate binding site; it reads ANGKA. Residue lysine 156 coordinates xanthine.

Belongs to the purine/pyrimidine phosphoribosyltransferase family. Xpt subfamily. In terms of assembly, homodimer.

It localises to the cytoplasm. The catalysed reaction is XMP + diphosphate = xanthine + 5-phospho-alpha-D-ribose 1-diphosphate. Its pathway is purine metabolism; XMP biosynthesis via salvage pathway; XMP from xanthine: step 1/1. Its function is as follows. Converts the preformed base xanthine, a product of nucleic acid breakdown, to xanthosine 5'-monophosphate (XMP), so it can be reused for RNA or DNA synthesis. The chain is Xanthine phosphoribosyltransferase from Ruminiclostridium cellulolyticum (strain ATCC 35319 / DSM 5812 / JCM 6584 / H10) (Clostridium cellulolyticum).